The following is a 104-amino-acid chain: uncharacterized protein (104 aa).

Positions 51-70 are disordered; it reads NPGRSLDNNKDVSDKGRSEF. Basic and acidic residues predominate over residues 57 to 70; sequence DNNKDVSDKGRSEF.

Belongs to the protein-tyrosine phosphatase family.

This is an uncharacterized protein from Xanthomonas campestris pv. campestris (strain ATCC 33913 / DSM 3586 / NCPPB 528 / LMG 568 / P 25).